Here is a 294-residue protein sequence, read N- to C-terminus: NAD kinase (294 aa).

The active-site Proton acceptor is Asp74. NAD(+)-binding positions include 74–75 (DG), Lys79, 149–150 (NE), Asp179, 190–195 (TGYSLS), and Ala214.

This sequence belongs to the NAD kinase family. A divalent metal cation serves as cofactor.

The protein localises to the cytoplasm. The catalysed reaction is NAD(+) + ATP = ADP + NADP(+) + H(+). Its function is as follows. Involved in the regulation of the intracellular balance of NAD and NADP, and is a key enzyme in the biosynthesis of NADP. Catalyzes specifically the phosphorylation on 2'-hydroxyl of the adenosine moiety of NAD to yield NADP. The polypeptide is NAD kinase (Christiangramia forsetii (strain DSM 17595 / CGMCC 1.15422 / KT0803) (Gramella forsetii)).